The chain runs to 457 residues: Protein N-terminal amidase (457 aa).

Residues 19–453 (LKVLVIQLNP…EGAILREVQF (435 aa)) form the CN hydrolase domain. The active-site Proton acceptor is the E63. Catalysis depends on K136, which acts as the Proton donor. The Nucleophile role is filled by C187.

It belongs to the carbon-nitrogen hydrolase superfamily.

Deamidates N-terminal Asn and Gln. Component of a targeting complex in the N-end rule pathway. In Saccharomyces cerevisiae (strain ATCC 204508 / S288c) (Baker's yeast), this protein is Protein N-terminal amidase (NTA1).